A 186-amino-acid chain; its full sequence is Large ribosomal subunit protein bL9 (186 aa).

The segment covering 151–167 has biased composition (basic and acidic residues); sequence PEEAEKQARGEAIMREE. A disordered region spans residues 151 to 186; that stretch reads PEEAEKQARGEAIMREESEYELETGEEVAEGPEQTA. The span at 168-180 shows a compositional bias: acidic residues; sequence SEYELETGEEVAE.

This sequence belongs to the bacterial ribosomal protein bL9 family.

In terms of biological role, binds to the 23S rRNA. The polypeptide is Large ribosomal subunit protein bL9 (Acidiphilium cryptum (strain JF-5)).